A 392-amino-acid chain; its full sequence is Heat-inducible transcription repressor HrcA (392 aa).

The protein belongs to the HrcA family.

Negative regulator of class I heat shock genes (grpE-dnaK-dnaJ and groELS operons). Prevents heat-shock induction of these operons. This Chlamydia trachomatis serovar A (strain ATCC VR-571B / DSM 19440 / HAR-13) protein is Heat-inducible transcription repressor HrcA.